The primary structure comprises 359 residues: UDP-N-acetylglucosamine--N-acetylmuramyl-(pentapeptide) pyrophosphoryl-undecaprenol N-acetylglucosamine transferase (359 aa).

Residues 15–17 (TGG), Asn127, Arg166, Ser191, Ile245, 264–269 (ALTVSE), and Gln290 each bind UDP-N-acetyl-alpha-D-glucosamine.

Belongs to the glycosyltransferase 28 family. MurG subfamily.

Its subcellular location is the cell inner membrane. It catalyses the reaction di-trans,octa-cis-undecaprenyl diphospho-N-acetyl-alpha-D-muramoyl-L-alanyl-D-glutamyl-meso-2,6-diaminopimeloyl-D-alanyl-D-alanine + UDP-N-acetyl-alpha-D-glucosamine = di-trans,octa-cis-undecaprenyl diphospho-[N-acetyl-alpha-D-glucosaminyl-(1-&gt;4)]-N-acetyl-alpha-D-muramoyl-L-alanyl-D-glutamyl-meso-2,6-diaminopimeloyl-D-alanyl-D-alanine + UDP + H(+). Its pathway is cell wall biogenesis; peptidoglycan biosynthesis. Cell wall formation. Catalyzes the transfer of a GlcNAc subunit on undecaprenyl-pyrophosphoryl-MurNAc-pentapeptide (lipid intermediate I) to form undecaprenyl-pyrophosphoryl-MurNAc-(pentapeptide)GlcNAc (lipid intermediate II). In Pseudomonas putida (strain W619), this protein is UDP-N-acetylglucosamine--N-acetylmuramyl-(pentapeptide) pyrophosphoryl-undecaprenol N-acetylglucosamine transferase.